A 217-amino-acid chain; its full sequence is Adenylate kinase (217 aa).

10-15 contacts ATP; that stretch reads GIGKGT. The NMP stretch occupies residues 30 to 59; sequence ATGDIFRKNFKENTELGILIKKIIAQGLLV. Residues Thr-31, Arg-36, 57–59, 85–88, and Gln-92 contribute to the AMP site; these read LLV and GFPR. The segment at 126–163 is LID; the sequence is GRRICPECGKVYHIENIPPKTPGICDKDQKTLIQREDD. ATP is bound at residue Arg-127. The Zn(2+) site is built by Cys-130 and Cys-133. Position 136–137 (136–137) interacts with ATP; the sequence is VY. Positions 150 and 153 each coordinate Zn(2+). Residues Arg-160 and Arg-171 each contribute to the AMP site. Gln-199 contributes to the ATP binding site.

Belongs to the adenylate kinase family. Monomer.

It localises to the cytoplasm. It catalyses the reaction AMP + ATP = 2 ADP. The protein operates within purine metabolism; AMP biosynthesis via salvage pathway; AMP from ADP: step 1/1. Its function is as follows. Catalyzes the reversible transfer of the terminal phosphate group between ATP and AMP. Plays an important role in cellular energy homeostasis and in adenine nucleotide metabolism. The sequence is that of Adenylate kinase from Onion yellows phytoplasma (strain OY-M).